The following is a 450-amino-acid chain: Phosphoglucosamine mutase (450 aa).

Serine 102 acts as the Phosphoserine intermediate in catalysis. 4 residues coordinate Mg(2+): serine 102, aspartate 243, aspartate 245, and aspartate 247. A Phosphoserine modification is found at serine 102.

The protein belongs to the phosphohexose mutase family. It depends on Mg(2+) as a cofactor. Activated by phosphorylation.

It catalyses the reaction alpha-D-glucosamine 1-phosphate = D-glucosamine 6-phosphate. Catalyzes the conversion of glucosamine-6-phosphate to glucosamine-1-phosphate. The sequence is that of Phosphoglucosamine mutase from Rhizobium meliloti (strain 1021) (Ensifer meliloti).